We begin with the raw amino-acid sequence, 239 residues long: Phosphoribosylaminoimidazole-succinocarboxamide synthase (239 aa).

It belongs to the SAICAR synthetase family.

The enzyme catalyses 5-amino-1-(5-phospho-D-ribosyl)imidazole-4-carboxylate + L-aspartate + ATP = (2S)-2-[5-amino-1-(5-phospho-beta-D-ribosyl)imidazole-4-carboxamido]succinate + ADP + phosphate + 2 H(+). Its pathway is purine metabolism; IMP biosynthesis via de novo pathway; 5-amino-1-(5-phospho-D-ribosyl)imidazole-4-carboxamide from 5-amino-1-(5-phospho-D-ribosyl)imidazole-4-carboxylate: step 1/2. This chain is Phosphoribosylaminoimidazole-succinocarboxamide synthase, found in Shouchella clausii (strain KSM-K16) (Alkalihalobacillus clausii).